A 795-amino-acid chain; its full sequence is uncharacterized protein (795 aa).

Positions 228–280 form a coiled coil; it reads NIICFKNKCKNNEKEKKEEEEDHDHDHDDKKKEKEDKEKEEEEEEEDSNDDFE. Disordered regions lie at residues 242–278, 326–430, 455–484, and 673–743; these read EKKE…SNDD, TTTT…TPNR, INQQ…KSEP, and NNNN…NENE. Residues 251 to 264 show a composition bias toward basic and acidic residues; that stretch reads DHDHDDKKKEKEDK. A compositionally biased stretch (acidic residues) spans 265 to 278; that stretch reads EKEEEEEEEDSNDD. Residues 326-345 are compositionally biased toward low complexity; it reads TTTTTVNGSKNSSNTTTPIT. Over residues 362 to 373 the composition is skewed to acidic residues; it reads DDDDDDDLTDED. Residues 377–398 show a composition bias toward polar residues; the sequence is HNEIYSTSPKVSHSTFCQSSPT. 3 stretches are compositionally biased toward low complexity: residues 399–414, 455–480, and 673–729; these read LLDL…QQQQ, INQQ…SSNI, and NNNN…NQNE. Positions 732–743 are enriched in basic and acidic residues; the sequence is NENKNENENENE.

This is an uncharacterized protein from Dictyostelium discoideum (Social amoeba).